Consider the following 375-residue polypeptide: Alcohol dehydrogenase 1A (375 aa).

Position 1 is an N-acetylglycine (Gly1). Cys46, His67, Cys97, Cys100, Cys103, Cys111, and Cys174 together coordinate Zn(2+). NAD(+) contacts are provided by residues Gly199–Gly204, Asp223, Lys228, Val293–Leu295, and Arg370.

The protein belongs to the zinc-containing alcohol dehydrogenase family. Class-I subfamily. In terms of assembly, multimeric (with different ratios of monomers). Zn(2+) serves as cofactor.

It localises to the cytoplasm. The catalysed reaction is a primary alcohol + NAD(+) = an aldehyde + NADH + H(+). It catalyses the reaction a secondary alcohol + NAD(+) = a ketone + NADH + H(+). The chain is Alcohol dehydrogenase 1A from Saara hardwickii (Indian spiny-tailed lizard).